The primary structure comprises 267 residues: PF03932 family protein CutC (267 aa).

It belongs to the CutC family.

The protein resides in the cytoplasm. The polypeptide is PF03932 family protein CutC (Xylella fastidiosa (strain 9a5c)).